The following is a 505-amino-acid chain: Catalase (505 aa).

Active-site residues include H56 and N129. Y339 provides a ligand contact to heme.

Belongs to the catalase family. Heme serves as cofactor.

It localises to the cytoplasm. The catalysed reaction is 2 H2O2 = O2 + 2 H2O. In terms of biological role, decomposes hydrogen peroxide into water and oxygen; serves to protect cells from the toxic effects of hydrogen peroxide. The chain is Catalase (katA) from Helicobacter pylori (strain ATCC 700392 / 26695) (Campylobacter pylori).